Reading from the N-terminus, the 941-residue chain is Protocadherin alpha-12 (941 aa).

Positions 1–29 (MVIIGPRGPGSQRLLLSLLLLAAWEVGSG) are cleaved as a signal peptide. Cadherin domains follow at residues 30 to 133 (QLHY…PPVF), 134 to 242 (RERE…GPAF), 243 to 350 (DKPS…VPEV), 351 to 455 (MVTS…APAF), 456 to 565 (AQPE…APAL), and 581 to 678 (VPRS…APKT). Over 30–697 (QLHYSVYEEA…DPEAALVDIN (668 aa)) the chain is Extracellular. 2 N-linked (GlcNAc...) asparagine glycosylation sites follow: asparagine 257 and asparagine 265. N-linked (GlcNAc...) asparagine glycosylation occurs at asparagine 548. The chain crosses the membrane as a helical span at residues 698–718 (VYLIIAICAVSSLLVLTLLLY). Residues 719 to 941 (TALRCSAPPT…GNSTTDNSDQ (223 aa)) lie on the Cytoplasmic side of the membrane. PXXP repeat units lie at residues 734–737 (PGKP), 790–793 (PRQP), 823–826 (PGGP), 863–866 (GPGN), and 882–885 (PGSP). The tract at residues 734-885 (PGKPTLVCSS…PDKFIIPGSP (152 aa)) is 5 X 4 AA repeats of P-X-X-P. The disordered stretch occupies residues 818-941 (ILRAGPGGPD…GNSTTDNSDQ (124 aa)). Residues 900–914 (DKSDFITFGKKEETK) are compositionally biased toward basic and acidic residues.

Its subcellular location is the cell membrane. In terms of biological role, potential calcium-dependent cell-adhesion protein. May be involved in the establishment and maintenance of specific neuronal connections in the brain. The chain is Protocadherin alpha-12 (PCDHA12) from Homo sapiens (Human).